Consider the following 358-residue polypeptide: Probable translocation protein Y4yK (358 aa).

This sequence belongs to the FliN/MopA/SpaO family.

Could be involved in the secretion of an unknown factor. This Sinorhizobium fredii (strain NBRC 101917 / NGR234) protein is Probable translocation protein Y4yK.